Reading from the N-terminus, the 454-residue chain is MALNVVILAAGKGTRMRSDLPKVLHPIAHKSMVQHVIDTAHSIGSDAIQLVYGYGADKLQASLGEQQLNWVLQAEQLGTGHAVAQASPYIADNDTVLILYGDVPLIQASTLEALLAARPENGVAILTVNLANPTGYGRIVREQGKVVGIIEQKDANPEQLLINEINTGIMAVPGKQLKTWLSRLSNNNAQGEYYLTDIIAMAHADGVAIDTAQPQSAIEVEGANNRVQLAQLERAYQAREAEKLMLAGANLRDPHRIDIRGEVTVGMDVMIDINVIFEGKVILGNNVTIGAGAILIDCEIADGAEIKPYSIIEGAKLGVAASAGPFARLRPGAELKQDAHIGNFVEVKKAIIGVGSKAGHLAYLGDAIIGDGVNIGAGTITCNYDGANKHLTVIEDNVFVGSDTQLVAPVTIGKGATLGAGSTITRDVGENELVITRVKQKHLLDWKRPVKIKK.

The interval 1 to 226 (MALNVVILAA…AIEVEGANNR (226 aa)) is pyrophosphorylase. UDP-N-acetyl-alpha-D-glucosamine is bound by residues 8-11 (LAAG), lysine 22, glutamine 73, 78-79 (GT), 100-102 (YGD), glycine 137, glutamate 151, asparagine 166, and asparagine 224. A Mg(2+)-binding site is contributed by aspartate 102. Asparagine 224 contributes to the Mg(2+) binding site. Positions 227–247 (VQLAQLERAYQAREAEKLMLA) are linker. Residues 248–454 (GANLRDPHRI…DWKRPVKIKK (207 aa)) are N-acetyltransferase. UDP-N-acetyl-alpha-D-glucosamine-binding residues include arginine 330 and lysine 348. Catalysis depends on histidine 360, which acts as the Proton acceptor. Residues tyrosine 363 and asparagine 374 each contribute to the UDP-N-acetyl-alpha-D-glucosamine site. Residues alanine 377, 383–384 (NY), serine 402, alanine 420, and arginine 437 contribute to the acetyl-CoA site.

It in the N-terminal section; belongs to the N-acetylglucosamine-1-phosphate uridyltransferase family. The protein in the C-terminal section; belongs to the transferase hexapeptide repeat family. In terms of assembly, homotrimer. Mg(2+) is required as a cofactor.

Its subcellular location is the cytoplasm. It carries out the reaction alpha-D-glucosamine 1-phosphate + acetyl-CoA = N-acetyl-alpha-D-glucosamine 1-phosphate + CoA + H(+). The catalysed reaction is N-acetyl-alpha-D-glucosamine 1-phosphate + UTP + H(+) = UDP-N-acetyl-alpha-D-glucosamine + diphosphate. Its pathway is nucleotide-sugar biosynthesis; UDP-N-acetyl-alpha-D-glucosamine biosynthesis; N-acetyl-alpha-D-glucosamine 1-phosphate from alpha-D-glucosamine 6-phosphate (route II): step 2/2. It functions in the pathway nucleotide-sugar biosynthesis; UDP-N-acetyl-alpha-D-glucosamine biosynthesis; UDP-N-acetyl-alpha-D-glucosamine from N-acetyl-alpha-D-glucosamine 1-phosphate: step 1/1. It participates in bacterial outer membrane biogenesis; LPS lipid A biosynthesis. Its function is as follows. Catalyzes the last two sequential reactions in the de novo biosynthetic pathway for UDP-N-acetylglucosamine (UDP-GlcNAc). The C-terminal domain catalyzes the transfer of acetyl group from acetyl coenzyme A to glucosamine-1-phosphate (GlcN-1-P) to produce N-acetylglucosamine-1-phosphate (GlcNAc-1-P), which is converted into UDP-GlcNAc by the transfer of uridine 5-monophosphate (from uridine 5-triphosphate), a reaction catalyzed by the N-terminal domain. This is Bifunctional protein GlmU from Shewanella putrefaciens (strain CN-32 / ATCC BAA-453).